The primary structure comprises 644 residues: Exoribonuclease 2 (644 aa).

The 328-residue stretch at 189–516 (RQDLTALNFV…NHRLLKAVIK (328 aa)) folds into the RNB domain. An S1 motif domain is found at 561 to 643 (DTRFAAEIID…DTRSIIARPA (83 aa)).

This sequence belongs to the RNR ribonuclease family. RNase II subfamily.

The protein localises to the cytoplasm. The catalysed reaction is Exonucleolytic cleavage in the 3'- to 5'-direction to yield nucleoside 5'-phosphates.. Involved in mRNA degradation. Hydrolyzes single-stranded polyribonucleotides processively in the 3' to 5' direction. The protein is Exoribonuclease 2 of Salmonella arizonae (strain ATCC BAA-731 / CDC346-86 / RSK2980).